The sequence spans 427 residues: MFFTCGPNEAMVVSGFCRSPPVMVAGGRVFVLPCIQQIQRISLNTLTLNVKSEKVYTRHGVPISVTGIAQVKIQGQNKEMLAAACQMFLGKTEAEIAHIALETLEGHQRAIMAHMTVEEIYKDRQKFSEQVFKVASSDLVNMGISVVSYTLKDIHDDQDYLHSLGKARTAQVQKDARIGEAEAKRDAGIREAKAKQEKVSAQYLSEIEMAKAQRDYELKKAAYDIEVNTRRAQADLAYQLQVAKTKQQIEEQRVQVQVVERAQQVAVQEQEIARREKELEARVRKPAEAERYKLERLAEAEKSQLIMQAEAEAESVRMRGEAEAFAIGARARAEAEQMAKKAEAFQLYQEAAQLDMLLEKLPQVAEEISGPLTSANKITLVSSGSGTMGAAKVTGEVLDILTRLPESVERLTGVSISQVNHKPLRTA.

Phosphoserine occurs at positions 19, 163, and 385. T387 is subject to Phosphothreonine.

The protein belongs to the band 7/mec-2 family. Flotillin subfamily. In terms of assembly, heterooligomeric complex of flotillin-1 and flotillin-2 and caveolin-1 and caveolin-2. Interacts with ECPAS.

Its subcellular location is the cell membrane. It localises to the endosome. The protein localises to the membrane. The protein resides in the caveola. It is found in the melanosome. Its subcellular location is the membrane raft. May act as a scaffolding protein within caveolar membranes, functionally participating in formation of caveolae or caveolae-like vesicles. This is Flotillin-1 (FLOT1) from Macaca mulatta (Rhesus macaque).